The following is a 466-amino-acid chain: Exodeoxyribonuclease 7 large subunit (466 aa).

Belongs to the XseA family. Heterooligomer composed of large and small subunits.

Its subcellular location is the cytoplasm. The enzyme catalyses Exonucleolytic cleavage in either 5'- to 3'- or 3'- to 5'-direction to yield nucleoside 5'-phosphates.. Functionally, bidirectionally degrades single-stranded DNA into large acid-insoluble oligonucleotides, which are then degraded further into small acid-soluble oligonucleotides. The polypeptide is Exodeoxyribonuclease 7 large subunit (Ruthia magnifica subsp. Calyptogena magnifica).